Here is a 420-residue protein sequence, read N- to C-terminus: Serine hydroxymethyltransferase (420 aa).

(6S)-5,6,7,8-tetrahydrofolate-binding positions include Leu121 and 125–127; that span reads GHL. Lys229 carries the N6-(pyridoxal phosphate)lysine modification.

It belongs to the SHMT family. In terms of assembly, homodimer. It depends on pyridoxal 5'-phosphate as a cofactor.

The protein resides in the cytoplasm. It carries out the reaction (6R)-5,10-methylene-5,6,7,8-tetrahydrofolate + glycine + H2O = (6S)-5,6,7,8-tetrahydrofolate + L-serine. It functions in the pathway one-carbon metabolism; tetrahydrofolate interconversion. It participates in amino-acid biosynthesis; glycine biosynthesis; glycine from L-serine: step 1/1. In terms of biological role, catalyzes the reversible interconversion of serine and glycine with tetrahydrofolate (THF) serving as the one-carbon carrier. This reaction serves as the major source of one-carbon groups required for the biosynthesis of purines, thymidylate, methionine, and other important biomolecules. Also exhibits THF-independent aldolase activity toward beta-hydroxyamino acids, producing glycine and aldehydes, via a retro-aldol mechanism. In Wigglesworthia glossinidia brevipalpis, this protein is Serine hydroxymethyltransferase.